Reading from the N-terminus, the 208-residue chain is Small ribosomal subunit protein uS4 (208 aa).

Positions 95–157 constitute an S4 RNA-binding domain; it reads RRIDNVVYRA…DSLKKLIRSN (63 aa).

Belongs to the universal ribosomal protein uS4 family. In terms of assembly, part of the 30S ribosomal subunit. Contacts protein S5. The interaction surface between S4 and S5 is involved in control of translational fidelity.

In terms of biological role, one of the primary rRNA binding proteins, it binds directly to 16S rRNA where it nucleates assembly of the body of the 30S subunit. With S5 and S12 plays an important role in translational accuracy. This Borreliella burgdorferi (strain ATCC 35210 / DSM 4680 / CIP 102532 / B31) (Borrelia burgdorferi) protein is Small ribosomal subunit protein uS4.